The chain runs to 450 residues: Putative receptor-like protein kinase At1g72540 (450 aa).

The residue at position 73 (T73) is a Phosphothreonine. Residues 84-365 enclose the Protein kinase domain; sequence FSKYNFLGEG…TVVKTLEPIL (282 aa). ATP contacts are provided by residues 90-98 and K119; that span reads LGEGGFGEV. Y164 is modified (phosphotyrosine). The active-site Proton acceptor is D214. S218 carries the phosphoserine modification. Phosphothreonine is present on T254. Y262 carries the post-translational modification Phosphotyrosine.

This sequence belongs to the protein kinase superfamily. Ser/Thr protein kinase family.

It carries out the reaction L-seryl-[protein] + ATP = O-phospho-L-seryl-[protein] + ADP + H(+). It catalyses the reaction L-threonyl-[protein] + ATP = O-phospho-L-threonyl-[protein] + ADP + H(+). This Arabidopsis thaliana (Mouse-ear cress) protein is Putative receptor-like protein kinase At1g72540.